The primary structure comprises 669 residues: Bestrophin-3 (669 aa).

Residues 1–31 (MTVTYSSKVANATFFGFHRLLLKWRGSIYKL) are Cytoplasmic-facing. Alanine 10 contacts Ca(2+). Residues 32–51 (LYREFIVFAVLYTAISLVYR) traverse the membrane as a helical segment. Residues 52 to 60 (LLLTGAQKR) lie on the Extracellular side of the membrane. A helical transmembrane segment spans residues 61-82 (YFEKLSIYCDRYAEQIPVTFVL). The Cytoplasmic portion of the chain corresponds to 83-237 (GFYVTLVVNR…DWVGIPLVYT (155 aa)). A helical membrane pass occupies residues 238-255 (QVVTLAVYTFFFACLIGR). The Extracellular segment spans residues 256–274 (QFLDPTKGYVGHDLDLYVP). The chain crosses the membrane as a helical span at residues 275–288 (IFTLLQFFFYAGWL). Topologically, residues 289 to 669 (KVAEQLINPF…GTPQRPRTWF (381 aa)) are cytoplasmic. Residues glutamine 293, asparagine 296, aspartate 301, and aspartate 304 each coordinate Ca(2+). 4 disordered regions span residues 399 to 496 (LSTH…TKMP), 533 to 560 (QPSG…SAST), 591 to 627 (TSLG…GAGS), and 646 to 669 (ILEF…RTWF). Basic residues predominate over residues 440 to 451 (NPHRGSPTRKQS). The span at 475–492 (RTSTLQSLSPQSSVRSSP) shows a compositional bias: low complexity. Residues 533 to 543 (QPSGTEQQVEP) are compositionally biased toward polar residues. Basic and acidic residues predominate over residues 646–656 (ILEFNNEHTGE).

Belongs to the anion channel-forming bestrophin (TC 1.A.46) family. Calcium-sensitive chloride channel subfamily. As to expression, expressed in heart. Expressed in brain, retina/retinal pigment epithelium (RPE) and skeletal muscle. Expressed in acinar cells of parotid glands. Expressed in lung, kidney and testis.

Its subcellular location is the cell membrane. It catalyses the reaction chloride(in) = chloride(out). In terms of biological role, ligand-gated anion channel that allows the movement of chloride monoatomic anions across cell membranes when activated by calcium (Ca2+). Does not function as calcium-gated chloride channel. This Mus musculus (Mouse) protein is Bestrophin-3 (Best3).